A 158-amino-acid polypeptide reads, in one-letter code: Cyclic pyranopterin monophosphate synthase (158 aa).

Substrate contacts are provided by residues 74-76 (MCH) and 112-113 (ME). The active site involves Asp127.

This sequence belongs to the MoaC family. In terms of assembly, homohexamer; trimer of dimers.

It catalyses the reaction (8S)-3',8-cyclo-7,8-dihydroguanosine 5'-triphosphate = cyclic pyranopterin phosphate + diphosphate. Its pathway is cofactor biosynthesis; molybdopterin biosynthesis. Functionally, catalyzes the conversion of (8S)-3',8-cyclo-7,8-dihydroguanosine 5'-triphosphate to cyclic pyranopterin monophosphate (cPMP). The chain is Cyclic pyranopterin monophosphate synthase from Helicobacter pylori (strain ATCC 700392 / 26695) (Campylobacter pylori).